The following is a 206-amino-acid chain: FMN-dependent NADH:quinone oxidoreductase 2 (206 aa).

S10 serves as a coordination point for FMN.

Belongs to the azoreductase type 1 family. Homodimer. FMN is required as a cofactor.

It catalyses the reaction 2 a quinone + NADH + H(+) = 2 a 1,4-benzosemiquinone + NAD(+). The enzyme catalyses N,N-dimethyl-1,4-phenylenediamine + anthranilate + 2 NAD(+) = 2-(4-dimethylaminophenyl)diazenylbenzoate + 2 NADH + 2 H(+). In terms of biological role, quinone reductase that provides resistance to thiol-specific stress caused by electrophilic quinones. Functionally, also exhibits azoreductase activity. Catalyzes the reductive cleavage of the azo bond in aromatic azo compounds to the corresponding amines. This is FMN-dependent NADH:quinone oxidoreductase 2 from Rhizobium etli (strain ATCC 51251 / DSM 11541 / JCM 21823 / NBRC 15573 / CFN 42).